A 145-amino-acid polypeptide reads, in one-letter code: MKFSYAIAAVVAAAASVQAVETNGQRMARGLKPLPPRNIHRRASRTNEARGATPSGTPSGGDYNCNTGSVQCCNQVSKANDTVISAILGLLGIGGVADDVLVGLKCSPLSVVGLGSGNSCSQRPVCCENNSKGGLVSIGCIPITL.

Positions 1 to 19 (MKFSYAIAAVVAAAASVQA) are cleaved as a signal peptide. 4 cysteine pairs are disulfide-bonded: Cys-65/Cys-126, Cys-72/Cys-120, Cys-73/Cys-106, and Cys-127/Cys-140. Residues Asn-80 and Asn-129 are each glycosylated (N-linked (GlcNAc...) asparagine).

The protein belongs to the fungal hydrophobin family. As to quaternary structure, self-assembles to form functional amyloid fibrils called rodlets. Self-assembly into fibrillar rodlets occurs spontaneously at hydrophobic:hydrophilic interfaces and the rodlets further associate laterally to form amphipathic monolayers.

The protein resides in the secreted. The protein localises to the cell wall. Its function is as follows. Aerial growth, conidiation, and dispersal of filamentous fungi in the environment rely upon a capability of their secreting small amphipathic proteins called hydrophobins (HPBs) with low sequence identity. Class I can self-assemble into an outermost layer of rodlet bundles on aerial cell surfaces, conferring cellular hydrophobicity that supports fungal growth, development and dispersal; whereas Class II form highly ordered films at water-air interfaces through intermolecular interactions but contribute nothing to the rodlet structure. Hyd1 is a class I hydrophobin that is crucial for the initiation of primordia formation. Plays also important roles in nitrogen regulation and resistance to abiotic stresses. In Ganoderma lucidum (Ling zhi medicinal fungus), this protein is Class I hydrophobin 1.